Here is a 144-residue protein sequence, read N- to C-terminus: Large ribosomal subunit protein uL13 (144 aa).

The protein belongs to the universal ribosomal protein uL13 family. Part of the 50S ribosomal subunit.

In terms of biological role, this protein is one of the early assembly proteins of the 50S ribosomal subunit, although it is not seen to bind rRNA by itself. It is important during the early stages of 50S assembly. This chain is Large ribosomal subunit protein uL13, found in Magnetococcus marinus (strain ATCC BAA-1437 / JCM 17883 / MC-1).